A 421-amino-acid polypeptide reads, in one-letter code: Polymerase delta-interacting protein 3 (421 aa).

Ala-2 bears the N-acetylalanine mark. Residue Ser-5 is modified to Phosphoserine. An Omega-N-methylarginine modification is found at Arg-33. Phosphoserine occurs at positions 44 and 127. Position 140 is a phosphothreonine (Thr-140). Lys-200 participates in a covalent cross-link: Glycyl lysine isopeptide (Lys-Gly) (interchain with G-Cter in SUMO2). A phosphoserine mark is found at Ser-204, Ser-215, and Ser-217. A Glycyl lysine isopeptide (Lys-Gly) (interchain with G-Cter in SUMO2) cross-link involves residue Lys-223. Ser-244 carries the phosphoserine modification. A Glycyl lysine isopeptide (Lys-Gly) (interchain with G-Cter in SUMO2) cross-link involves residue Lys-248. Phosphoserine is present on Ser-275. The RRM domain occupies 280–351 (TKMTVNNLHP…QPMKCNLHMN (72 aa)). A compositionally biased stretch (basic and acidic residues) spans 370–379 (SMKKESELPR). The disordered stretch occupies residues 370–393 (SMKKESELPRRVNSASSSNPPAEV). Lys-372 participates in a covalent cross-link: Glycyl lysine isopeptide (Lys-Gly) (interchain with G-Cter in SUMO2). 2 positions are modified to phosphoserine; by RPS6KB1: Ser-383 and Ser-385. Lys-418 participates in a covalent cross-link: Glycyl lysine isopeptide (Lys-Gly) (interchain with G-Cter in SUMO2).

In terms of assembly, interacts with POLD2. Interacts with NCBP1 and EIF4A3. Associates with the multiprotein exon junction complex (EJC). Interacts with RPS6KB1 (activated). Interacts with ERH. Interacts with THOC2, DDX39B and ZC3H11A; the interactions are ATP-dependent and indicative for an association with the TREX complex. In terms of processing, phosphorylated at Ser-383 and Ser-385 by RPS6KB1.

It localises to the nucleus. The protein resides in the nucleus speckle. The protein localises to the cytoplasm. Is involved in regulation of translation. Is preferentially associated with CBC-bound spliced mRNA-protein complexes during the pioneer round of mRNA translation. Contributes to enhanced translational efficiency of spliced over nonspliced mRNAs. Recruits activated ribosomal protein S6 kinase beta-1 I/RPS6KB1 to newly synthesized mRNA. Involved in nuclear mRNA export; probably mediated by association with the TREX complex. The polypeptide is Polymerase delta-interacting protein 3 (POLDIP3) (Homo sapiens (Human)).